The primary structure comprises 1131 residues: PPi-type phosphoenolpyruvate carboxykinase (1131 aa).

Belongs to the PPi-type phosphoenolpyruvate carboxykinase family. As to quaternary structure, monomer and trimer; forms heterotrimers with PEPCK2 and PEPCK3.

The catalysed reaction is oxaloacetate + diphosphate = phosphoenolpyruvate + phosphate + CO2. Its function is as follows. Inorganic pyrophosphate (PPi)-dependent phosphoenolpyruvate carboxykinase, which regulates the carbon flow of the central metabolism by fixing CO(2) to phosphoenolpyruvate to produce oxaloacetate. Can also produce pyruvate and diphosphate from phosphoenolpyruvate and phosphate. The sequence is that of PPi-type phosphoenolpyruvate carboxykinase from Propionibacterium freudenreichii subsp. freudenreichii.